The following is a 206-amino-acid chain: Small ribosomal subunit protein uS4 (206 aa).

The region spanning 96–156 is the S4 RNA-binding domain; it reads CRLDNVVYRM…EKSLNQLRIV (61 aa).

The protein belongs to the universal ribosomal protein uS4 family. In terms of assembly, part of the 30S ribosomal subunit. Contacts protein S5. The interaction surface between S4 and S5 is involved in control of translational fidelity.

One of the primary rRNA binding proteins, it binds directly to 16S rRNA where it nucleates assembly of the body of the 30S subunit. In terms of biological role, with S5 and S12 plays an important role in translational accuracy. This Pseudomonas entomophila (strain L48) protein is Small ribosomal subunit protein uS4.